The primary structure comprises 391 residues: 1-acyl-sn-glycerol-3-phosphate acyltransferase 2 (391 aa).

Residues 3 to 23 (MAAAAVIVPLGILFFISGLVV) form a helical membrane-spanning segment. The HXXXXD motif motif lies at 92–97 (HRSDID). 2 helical membrane-spanning segments follow: residues 306 to 326 (LAVV…FLHW) and 334 to 354 (KGIA…QILI). The segment at 358–391 (QSERSTPAKVAPAKPKDKHQSGSSSQTEVEEKQK) is disordered.

Belongs to the 1-acyl-sn-glycerol-3-phosphate acyltransferase family.

The protein resides in the endoplasmic reticulum membrane. The catalysed reaction is a 1-acyl-sn-glycero-3-phosphate + an acyl-CoA = a 1,2-diacyl-sn-glycero-3-phosphate + CoA. Its pathway is phospholipid metabolism; CDP-diacylglycerol biosynthesis; CDP-diacylglycerol from sn-glycerol 3-phosphate: step 2/3. Its function is as follows. Converts lysophosphatidic acid (LPA) into phosphatidic acid by incorporating acyl moiety at the 2 position. The protein is 1-acyl-sn-glycerol-3-phosphate acyltransferase 2 (LPAT2) of Brassica oleracea (Wild cabbage).